A 189-amino-acid chain; its full sequence is UPF0301 protein HRM2_24640 (189 aa).

It belongs to the UPF0301 (AlgH) family.

This Desulforapulum autotrophicum (strain ATCC 43914 / DSM 3382 / VKM B-1955 / HRM2) (Desulfobacterium autotrophicum) protein is UPF0301 protein HRM2_24640.